We begin with the raw amino-acid sequence, 62 residues long: Photosystem II reaction center protein Z (62 aa).

Helical transmembrane passes span 8–28 (AVFA…VVFA) and 41–61 (FSGT…NSLI).

This sequence belongs to the PsbZ family. As to quaternary structure, PSII is composed of 1 copy each of membrane proteins PsbA, PsbB, PsbC, PsbD, PsbE, PsbF, PsbH, PsbI, PsbJ, PsbK, PsbL, PsbM, PsbT, PsbY, PsbZ, Psb30/Ycf12, at least 3 peripheral proteins of the oxygen-evolving complex and a large number of cofactors. It forms dimeric complexes.

It localises to the plastid. The protein localises to the chloroplast thylakoid membrane. Functionally, may control the interaction of photosystem II (PSII) cores with the light-harvesting antenna, regulates electron flow through the 2 photosystem reaction centers. PSII is a light-driven water plastoquinone oxidoreductase, using light energy to abstract electrons from H(2)O, generating a proton gradient subsequently used for ATP formation. The chain is Photosystem II reaction center protein Z from Citrus sinensis (Sweet orange).